Reading from the N-terminus, the 57-residue chain is Orphan toxin OrtT (57 aa).

The next 2 membrane-spanning stretches (helical) occupy residues 6 to 26 and 34 to 54; these read HMLV…WFLS and FLSA…ALLF.

Belongs to the GhoT/OrtT toxin family.

Its subcellular location is the cell inner membrane. Its function is as follows. Acts as an orphan toxin which is important for maintaining cell fitness during stress related to the stringent response. Increases the formation of persister cells. Has no known antitoxin. This Escherichia coli O6:H1 (strain CFT073 / ATCC 700928 / UPEC) protein is Orphan toxin OrtT.